The primary structure comprises 301 residues: MENQNYSVAVIGLGSMGMGAAVSCINAGLTTYGIDLNPVALEKLKAAGAKAVAANGYDFAHELDAVVILVVNAAQANAVLFGENGIAKKLKAGTAVMVSSTMAAQDAQIISQKLTELGLIMLDAPVSGGAAKALKGEMTVMASGSKQAFELLQPVLDATAAKVYNIGEEIGLGATVKIVHQLLAGVHIAAGAEAMALASKAGIPLDVMYDVVTNAAGNSWMFENRMKHVVEGDYTPLSMVDIFVKDLGLVNDTAKSLHFPLHLASTAYSMFTEASNAGYGKEDDSAVIKIFSGVSLPKKGA.

Residues 6–34 (YSVA…TYGI) and T101 each bind NAD(+). Residue K177 is part of the active site. NAD(+) is bound at residue K245.

Belongs to the HIBADH-related family. L-threonate dehydrogenase subfamily.

The catalysed reaction is L-threonate + NAD(+) = 2-dehydro-L-erythronate + NADH + H(+). Its function is as follows. Catalyzes oxidation of L-threonate to 2-oxo-tetronate. Can use either NAD(+) or NADP(+) as cosubstrate, with a preference for NAD(+). This chain is L-threonate dehydrogenase, found in Haemophilus influenzae (strain ATCC 51907 / DSM 11121 / KW20 / Rd).